The sequence spans 171 residues: Macro domain-containing protein RSc0334 (171 aa).

The Macro domain occupies Met1–Arg171.

The protein belongs to the MacroD-type family.

The polypeptide is Macro domain-containing protein RSc0334 (Ralstonia nicotianae (strain ATCC BAA-1114 / GMI1000) (Ralstonia solanacearum)).